The following is a 155-amino-acid chain: MLHKKYRPNVAAIIMSPDYPNACEVFIAERIDIEGAWQFPQGGIDEGETPLEALHRELLEEIGTNEIEILAQYPRWIAYDFPSNMEHKFYSFDGQKQRYFLVRLKHTNNIDLNKHTPEFRAYQFIHLKDLLKRIVPFKRQVYRQVIAYFKREGYL.

The region spanning 5 to 147 (KYRPNVAAII…KRQVYRQVIA (143 aa)) is the Nudix hydrolase domain. The Nudix box signature appears at 42–63 (GGIDEGETPLEALHRELLEEIG).

This sequence belongs to the Nudix hydrolase family. RppH subfamily. A divalent metal cation serves as cofactor.

Accelerates the degradation of transcripts by removing pyrophosphate from the 5'-end of triphosphorylated RNA, leading to a more labile monophosphorylated state that can stimulate subsequent ribonuclease cleavage. In Helicobacter pylori (strain ATCC 700392 / 26695) (Campylobacter pylori), this protein is RNA pyrophosphohydrolase.